A 512-amino-acid polypeptide reads, in one-letter code: NAD(P)H-quinone oxidoreductase chain 4, chloroplastic (512 aa).

The next 14 membrane-spanning stretches (helical) occupy residues 4 to 24 (VPWL…IPLL), 34 to 54 (WYAL…FGCY), 87 to 107 (IGLI…AWPV), 111 to 131 (PKLF…LFAS), 134 to 154 (ILLF…LLSM), 167 to 187 (FILY…TASL), 208 to 228 (GLEI…LPAF), 242 to 262 (HYST…YGFI), 274 to 294 (TVFA…AALV), 308 to 328 (SSVS…DLGL), 330 to 350 (GAML…FLAG), 374 to 396 (MFAM…GFVS), 417 to 437 (IITL…LSMV), and 462 to 482 (VFVL…PNFA).

It belongs to the complex I subunit 4 family.

It is found in the plastid. It localises to the chloroplast thylakoid membrane. It catalyses the reaction a plastoquinone + NADH + (n+1) H(+)(in) = a plastoquinol + NAD(+) + n H(+)(out). It carries out the reaction a plastoquinone + NADPH + (n+1) H(+)(in) = a plastoquinol + NADP(+) + n H(+)(out). This is NAD(P)H-quinone oxidoreductase chain 4, chloroplastic from Zygnema circumcarinatum (Green alga).